The primary structure comprises 500 residues: Dipeptide and tripeptide permease A (500 aa).

Over 1–21 the chain is Cytoplasmic; sequence MSTANQKPTESVSLNAFKQPK. Residues 22–44 form a helical membrane-spanning segment; the sequence is AFYLIFSIELWERFGYYGLQGIM. Topologically, residues 45 to 59 are periplasmic; sequence AVYLVKQLGMSEADS. The helical transmembrane segment at 60–80 threads the bilayer; that stretch reads ITLFSSFSALVYGLVAIGGWL. Over 81 to 89 the chain is Cytoplasmic; sequence GDKVLGTKR. Residues 90–110 traverse the membrane as a helical segment; sequence VIMLGAIVLAIGYALVAWSGH. Residue D111 is a topological domain, periplasmic. The chain crosses the membrane as a helical span at residues 112-132; the sequence is AGIVYMGMAAIAVGNGLFKAN. The Cytoplasmic segment spans residues 133-153; the sequence is PSSLLSTCYEKNDPRLDGAFT. A helical transmembrane segment spans residues 154 to 174; the sequence is MYYMSVNIGSFFSMIATPWLA. The Periplasmic portion of the chain corresponds to 175 to 178; the sequence is AKYG. Residues 179-199 traverse the membrane as a helical segment; it reads WSVAFALSVVGLLITIVNFAF. The Cytoplasmic segment spans residues 200 to 219; it reads CQRWVKQYGSKPDFEPINYR. A helical membrane pass occupies residues 220-240; that stretch reads NLLLTIIGVVALIAIATWLLH. Residues 241–246 lie on the Periplasmic side of the membrane; the sequence is NQEVAR. Residues 247 to 267 form a helical membrane-spanning segment; that stretch reads MALGVVAFGIVVIFGKEAFAM. The Cytoplasmic segment spans residues 268 to 274; the sequence is KGAARRK. Residues 275–295 traverse the membrane as a helical segment; sequence MIVAFILMLEAIIFFVLYSQM. The Periplasmic portion of the chain corresponds to 296–320; sequence PTSLNFFAIRNVEHSILGLAVEPEQ. The helical transmembrane segment at 321–341 threads the bilayer; that stretch reads YQALNPFWIIIGSPILAAIYN. Residues 342–352 lie on the Cytoplasmic side of the membrane; the sequence is KMGDTLPMPTK. A helical transmembrane segment spans residues 353-373; that stretch reads FAIGMVMCSGAFLILPLGAKF. At 374-378 the chain is on the periplasmic side; it reads ASDAG. A helical transmembrane segment spans residues 379-399; it reads IVSVSWLVASYGLQSIGELMI. Residues 400-414 lie on the Cytoplasmic side of the membrane; that stretch reads SGLGLAMVAQLVPQR. The chain crosses the membrane as a helical span at residues 415 to 435; that stretch reads LMGFIMGSWFLTTAGANLIGG. The Periplasmic portion of the chain corresponds to 436–459; sequence YVAGMMAVPDNVTDPLMSLEVYGR. Residues 460–480 form a helical membrane-spanning segment; the sequence is VFLQIGVATAVIAVLMLLTAP. Residues 481 to 500 lie on the Cytoplasmic side of the membrane; that stretch reads KLHRMTQDDAADKAAKAAVA.

The protein belongs to the major facilitator superfamily. Proton-dependent oligopeptide transporter (POT/PTR) (TC 2.A.17) family. DtpA subfamily. In terms of assembly, monomer. Has a crown-like structure with a diameter of 8 nm and a central density.

Its subcellular location is the cell inner membrane. Functionally, proton-dependent permease that transports di- and tripeptides as well as structurally related peptidomimetics such as aminocephalosporins into the cell. Has a clear preference for dipeptides and tripeptides composed of L-amino acids, and discriminates dipeptides on the basis of the position of charges within the substrate. The polypeptide is Dipeptide and tripeptide permease A (dtpA) (Escherichia coli (strain K12)).